Consider the following 477-residue polypeptide: 3-isopropylmalate dehydratase large subunit 1 (477 aa).

Cys-357, Cys-417, and Cys-420 together coordinate [4Fe-4S] cluster.

This sequence belongs to the aconitase/IPM isomerase family. LeuC type 1 subfamily. Heterodimer of LeuC and LeuD. [4Fe-4S] cluster serves as cofactor.

It catalyses the reaction (2R,3S)-3-isopropylmalate = (2S)-2-isopropylmalate. It participates in amino-acid biosynthesis; L-leucine biosynthesis; L-leucine from 3-methyl-2-oxobutanoate: step 2/4. Functionally, catalyzes the isomerization between 2-isopropylmalate and 3-isopropylmalate, via the formation of 2-isopropylmaleate. The polypeptide is 3-isopropylmalate dehydratase large subunit 1 (Bradyrhizobium diazoefficiens (strain JCM 10833 / BCRC 13528 / IAM 13628 / NBRC 14792 / USDA 110)).